Consider the following 96-residue polypeptide: Co-chaperonin GroES (96 aa).

The protein belongs to the GroES chaperonin family. As to quaternary structure, heptamer of 7 subunits arranged in a ring. Interacts with the chaperonin GroEL.

The protein resides in the cytoplasm. Functionally, together with the chaperonin GroEL, plays an essential role in assisting protein folding. The GroEL-GroES system forms a nano-cage that allows encapsulation of the non-native substrate proteins and provides a physical environment optimized to promote and accelerate protein folding. GroES binds to the apical surface of the GroEL ring, thereby capping the opening of the GroEL channel. In Idiomarina loihiensis (strain ATCC BAA-735 / DSM 15497 / L2-TR), this protein is Co-chaperonin GroES.